We begin with the raw amino-acid sequence, 88 residues long: SPbeta prophage-derived protein BhlB (88 aa).

2 consecutive transmembrane segments (helical) span residues 15–35 and 45–65; these read LLAIALLNQIMVMLGKAAFII and DCLYTIFTIVFTTSTTTAAWF.

The protein belongs to the SPP1 holin family.

Its subcellular location is the cell membrane. In terms of biological role, may be involved in the secretion of the autolysin BlyA. The protein is SPbeta prophage-derived protein BhlB (bhlB) of Bacillus subtilis (strain 168).